A 137-amino-acid polypeptide reads, in one-letter code: MEQTLSIIKPDAVKKGVVGKIIDRFESNGLRIAAAKKLQLSVEDAKKFYEVHAARPFYGELVEFMTSGPVVVMVLEGDNAVVKNRELMGATNPKEAAAGTIRADFAESIDANAVHGSDSLENAKTEIAFFFAKREIC.

ATP is bound by residues Lys-9, Phe-57, Arg-85, Thr-91, Arg-102, and Asn-112. The active-site Pros-phosphohistidine intermediate is the His-115.

It belongs to the NDK family. In terms of assembly, homotetramer. The cofactor is Mg(2+).

The protein localises to the cytoplasm. The enzyme catalyses a 2'-deoxyribonucleoside 5'-diphosphate + ATP = a 2'-deoxyribonucleoside 5'-triphosphate + ADP. It carries out the reaction a ribonucleoside 5'-diphosphate + ATP = a ribonucleoside 5'-triphosphate + ADP. Its function is as follows. Major role in the synthesis of nucleoside triphosphates other than ATP. The ATP gamma phosphate is transferred to the NDP beta phosphate via a ping-pong mechanism, using a phosphorylated active-site intermediate. This Campylobacter fetus subsp. fetus (strain 82-40) protein is Nucleoside diphosphate kinase.